A 252-amino-acid chain; its full sequence is Small ribosomal subunit protein uS2 (252 aa).

Residue S2 is modified to N-acetylserine. Low complexity predominate over residues 213 to 222; sequence QVAEETAGAA. Residues 213 to 252 form a disordered region; the sequence is QVAEETAGAATEEEEAKEEVTEEQTEATEWAEETTEAVAW. Acidic residues predominate over residues 223–252; the sequence is TEEEEAKEEVTEEQTEATEWAEETTEAVAW.

The protein belongs to the universal ribosomal protein uS2 family. In terms of assembly, component of the small ribosomal subunit. Mature ribosomes consist of a small (40S) and a large (60S) subunit. The 40S subunit contains about 33 different proteins and 1 molecule of RNA (18S). The 60S subunit contains about 49 different proteins and 3 molecules of RNA (25S, 5.8S and 5S). Interacts with RPS21.

The protein localises to the cytoplasm. Required for the assembly and/or stability of the 40S ribosomal subunit. Required for the processing of the 20S rRNA-precursor to mature 18S rRNA in a late step of the maturation of 40S ribosomal subunits. In Zygosaccharomyces rouxii (strain ATCC 2623 / CBS 732 / NBRC 1130 / NCYC 568 / NRRL Y-229), this protein is Small ribosomal subunit protein uS2.